The chain runs to 415 residues: Gamma-glutamyl phosphate reductase (415 aa).

This sequence belongs to the gamma-glutamyl phosphate reductase family.

The protein localises to the cytoplasm. It catalyses the reaction L-glutamate 5-semialdehyde + phosphate + NADP(+) = L-glutamyl 5-phosphate + NADPH + H(+). The protein operates within amino-acid biosynthesis; L-proline biosynthesis; L-glutamate 5-semialdehyde from L-glutamate: step 2/2. In terms of biological role, catalyzes the NADPH-dependent reduction of L-glutamate 5-phosphate into L-glutamate 5-semialdehyde and phosphate. The product spontaneously undergoes cyclization to form 1-pyrroline-5-carboxylate. The chain is Gamma-glutamyl phosphate reductase from Clostridium perfringens (strain ATCC 13124 / DSM 756 / JCM 1290 / NCIMB 6125 / NCTC 8237 / Type A).